Consider the following 323-residue polypeptide: Beta-ketoacyl-[acyl-carrier-protein] synthase III (323 aa).

Catalysis depends on residues Cys-113 and His-250. The ACP-binding stretch occupies residues 251 to 255; the sequence is QANKR. Asn-280 is an active-site residue.

The protein belongs to the thiolase-like superfamily. FabH family. Homodimer.

It is found in the cytoplasm. It catalyses the reaction malonyl-[ACP] + acetyl-CoA + H(+) = 3-oxobutanoyl-[ACP] + CO2 + CoA. It functions in the pathway lipid metabolism; fatty acid biosynthesis. Catalyzes the condensation reaction of fatty acid synthesis by the addition to an acyl acceptor of two carbons from malonyl-ACP. Catalyzes the first condensation reaction which initiates fatty acid synthesis and may therefore play a role in governing the total rate of fatty acid production. Possesses both acetoacetyl-ACP synthase and acetyl transacylase activities. Its substrate specificity determines the biosynthesis of branched-chain and/or straight-chain of fatty acids. The sequence is that of Beta-ketoacyl-[acyl-carrier-protein] synthase III from Brucella suis (strain ATCC 23445 / NCTC 10510).